We begin with the raw amino-acid sequence, 418 residues long: Gamma-glutamyl phosphate reductase (418 aa).

This sequence belongs to the gamma-glutamyl phosphate reductase family.

The protein resides in the cytoplasm. It carries out the reaction L-glutamate 5-semialdehyde + phosphate + NADP(+) = L-glutamyl 5-phosphate + NADPH + H(+). It participates in amino-acid biosynthesis; L-proline biosynthesis; L-glutamate 5-semialdehyde from L-glutamate: step 2/2. Functionally, catalyzes the NADPH-dependent reduction of L-glutamate 5-phosphate into L-glutamate 5-semialdehyde and phosphate. The product spontaneously undergoes cyclization to form 1-pyrroline-5-carboxylate. The chain is Gamma-glutamyl phosphate reductase from Histophilus somni (strain 129Pt) (Haemophilus somnus).